The chain runs to 445 residues: Exodeoxyribonuclease 7 large subunit (445 aa).

The protein belongs to the XseA family. In terms of assembly, heterooligomer composed of large and small subunits.

It localises to the cytoplasm. The catalysed reaction is Exonucleolytic cleavage in either 5'- to 3'- or 3'- to 5'-direction to yield nucleoside 5'-phosphates.. Bidirectionally degrades single-stranded DNA into large acid-insoluble oligonucleotides, which are then degraded further into small acid-soluble oligonucleotides. The sequence is that of Exodeoxyribonuclease 7 large subunit from Xanthomonas oryzae pv. oryzae (strain KACC10331 / KXO85).